Here is a 619-residue protein sequence, read N- to C-terminus: Dihydroxy-acid dehydratase 1 (619 aa).

D81 lines the Mg(2+) pocket. C122 is a [2Fe-2S] cluster binding site. The Mg(2+) site is built by D123 and K124. N6-carboxylysine is present on K124. Position 201 (C201) interacts with [2Fe-2S] cluster. Residue E496 coordinates Mg(2+). S522 serves as the catalytic Proton acceptor.

Belongs to the IlvD/Edd family. In terms of assembly, homodimer. [2Fe-2S] cluster is required as a cofactor. It depends on Mg(2+) as a cofactor.

It catalyses the reaction (2R)-2,3-dihydroxy-3-methylbutanoate = 3-methyl-2-oxobutanoate + H2O. It carries out the reaction (2R,3R)-2,3-dihydroxy-3-methylpentanoate = (S)-3-methyl-2-oxopentanoate + H2O. Its pathway is amino-acid biosynthesis; L-isoleucine biosynthesis; L-isoleucine from 2-oxobutanoate: step 3/4. It functions in the pathway amino-acid biosynthesis; L-valine biosynthesis; L-valine from pyruvate: step 3/4. Functions in the biosynthesis of branched-chain amino acids. Catalyzes the dehydration of (2R,3R)-2,3-dihydroxy-3-methylpentanoate (2,3-dihydroxy-3-methylvalerate) into 2-oxo-3-methylpentanoate (2-oxo-3-methylvalerate) and of (2R)-2,3-dihydroxy-3-methylbutanoate (2,3-dihydroxyisovalerate) into 2-oxo-3-methylbutanoate (2-oxoisovalerate), the penultimate precursor to L-isoleucine and L-valine, respectively. The sequence is that of Dihydroxy-acid dehydratase 1 from Burkholderia lata (strain ATCC 17760 / DSM 23089 / LMG 22485 / NCIMB 9086 / R18194 / 383).